A 531-amino-acid polypeptide reads, in one-letter code: Maturase K (531 aa).

Belongs to the intron maturase 2 family. MatK subfamily.

It localises to the plastid. The protein resides in the chloroplast. Its function is as follows. Usually encoded in the trnK tRNA gene intron. Probably assists in splicing its own and other chloroplast group II introns. The chain is Maturase K from Ephedra sinica (Chinese ephedra).